The primary structure comprises 76 residues: Large ribosomal subunit protein bL31 (76 aa).

The protein belongs to the bacterial ribosomal protein bL31 family. Type A subfamily. In terms of assembly, part of the 50S ribosomal subunit.

Functionally, binds the 23S rRNA. The chain is Large ribosomal subunit protein bL31 from Gluconacetobacter diazotrophicus (strain ATCC 49037 / DSM 5601 / CCUG 37298 / CIP 103539 / LMG 7603 / PAl5).